We begin with the raw amino-acid sequence, 365 residues long: UDP-N-acetylglucosamine--N-acetylmuramyl-(pentapeptide) pyrophosphoryl-undecaprenol N-acetylglucosamine transferase (365 aa).

UDP-N-acetyl-alpha-D-glucosamine-binding positions include Thr-20–Gly-22, Asn-132, Arg-168, Ser-196, Ile-253, and Gln-298.

The protein belongs to the glycosyltransferase 28 family. MurG subfamily.

The protein resides in the cell inner membrane. The enzyme catalyses di-trans,octa-cis-undecaprenyl diphospho-N-acetyl-alpha-D-muramoyl-L-alanyl-D-glutamyl-meso-2,6-diaminopimeloyl-D-alanyl-D-alanine + UDP-N-acetyl-alpha-D-glucosamine = di-trans,octa-cis-undecaprenyl diphospho-[N-acetyl-alpha-D-glucosaminyl-(1-&gt;4)]-N-acetyl-alpha-D-muramoyl-L-alanyl-D-glutamyl-meso-2,6-diaminopimeloyl-D-alanyl-D-alanine + UDP + H(+). It functions in the pathway cell wall biogenesis; peptidoglycan biosynthesis. Its function is as follows. Cell wall formation. Catalyzes the transfer of a GlcNAc subunit on undecaprenyl-pyrophosphoryl-MurNAc-pentapeptide (lipid intermediate I) to form undecaprenyl-pyrophosphoryl-MurNAc-(pentapeptide)GlcNAc (lipid intermediate II). The chain is UDP-N-acetylglucosamine--N-acetylmuramyl-(pentapeptide) pyrophosphoryl-undecaprenol N-acetylglucosamine transferase from Ralstonia nicotianae (strain ATCC BAA-1114 / GMI1000) (Ralstonia solanacearum).